A 294-amino-acid polypeptide reads, in one-letter code: Factor associated with metabolism and energy (294 aa).

The segment covering 1–12 has biased composition (basic residues); the sequence is MGLGHSKAHPRV. Disordered stretches follow at residues 1-28 and 255-279; these read MGLG…TPST and FWDS…LVRT. A lipid anchor (N-myristoyl glycine) is attached at glycine 2. Residues 17–28 are compositionally biased toward polar residues; the sequence is PLQSQETETPST. Basic and acidic residues predominate over residues 268–279; that stretch reads KDERRPQALVRT.

In terms of tissue distribution, expressed in proximal tubules of the kidney.

The protein resides in the cell membrane. It localises to the cytoplasmic vesicle. Its function is as follows. May be involved in tuning the metabolism, energy expenditure, and excretion processes. The chain is Factor associated with metabolism and energy from Mus musculus (Mouse).